The sequence spans 182 residues: MIAQNMTIFFWGVCLLTSGWATYSEASVPENLDKSIDELKAYYIKDDHEIHNAHPVFLRVLKDLKVNLEEPEQNLLMSIIMDTYSRIFTRMENDSLDEATKERIAHVQEHLKKLRENYFPGKSAELKTYAETLWAIKEDDPVIQRKALFELKRVYREATLLKNLKNKERRRRQAKNTKNLKS.

A signal peptide spans 1 to 21; that stretch reads MIAQNMTIFFWGVCLLTSGWA. An N-linked (GlcNAc...) asparagine glycan is attached at Asn93.

Belongs to the type II (or gamma) interferon family. In terms of assembly, homodimer. Highly expressed in spleen. Also detected at lower levels in brain, gill, kidney, heart, intestine and muscle. In immune cell populations, has highest expression in peripheral blood leukocytes and splenocytes. Detected in kidney-derived monocytes, neutrophils, macrophages and leukocytes.

Its subcellular location is the secreted. In terms of biological role, cytokine which binds to interferon gamma receptor 1-like (ifngr1l). Has activating effects on primary macrophages and neutrophils. Induces nitric oxide production and phagocytic responses in macrophages. Primes macrophages and neutrophils for production of reactive oxygen intermediates (ROI). Stimulates phosphorylation and nuclear localization of the JAK/STAT signal transducer stat1. Promotes increased expression of a number of genes important for macrophage activity, including the interferon regulatory factors irf1, irf2, irf8 and irf9. The chain is Interferon gamma 1 from Carassius auratus (Goldfish).